The primary structure comprises 472 residues: Ribulose bisphosphate carboxylase large chain (472 aa).

2 residues coordinate substrate: Asn120 and Thr170. Residue Lys172 is the Proton acceptor of the active site. Lys174 lines the substrate pocket. The Mg(2+) site is built by Lys198, Asp200, and Glu201. An N6-carboxylysine modification is found at Lys198. Residue His291 is the Proton acceptor of the active site. Substrate contacts are provided by Arg292, His324, and Ser376. An Interacts with RbcX2 motif is present at residues 461-467; it reads EIKFEFE.

This sequence belongs to the RuBisCO large chain family. Type I subfamily. In terms of assembly, heterohexadecamer of 8 large chains and 8 small chains; disulfide-linked. The disulfide link is formed within the large subunit homodimers. The exposed C-terminus binds in a cleft in the RbcX2 (shown with endogenous and Anabaena strain CA protein). RbcX2 is displaced by RbcS; as RbcX2 is removed RbcS mediates the ordering of an internal RbcL loop (Thr-64-Leu-70) in a catalytically active conformation. The cofactor is Mg(2+). Post-translationally, the disulfide bond which can form in the large chain dimeric partners within the hexadecamer appears to be associated with oxidative stress and protein turnover.

It is found in the carboxysome. It carries out the reaction 2 (2R)-3-phosphoglycerate + 2 H(+) = D-ribulose 1,5-bisphosphate + CO2 + H2O. The catalysed reaction is D-ribulose 1,5-bisphosphate + O2 = 2-phosphoglycolate + (2R)-3-phosphoglycerate + 2 H(+). Its function is as follows. RuBisCO catalyzes two reactions: the carboxylation of D-ribulose 1,5-bisphosphate, the primary event in carbon dioxide fixation, as well as the oxidative fragmentation of the pentose substrate in the photorespiration process. Both reactions occur simultaneously and in competition at the same active site. The chain is Ribulose bisphosphate carboxylase large chain (cbbL) from Synechococcus sp. (strain ATCC 27144 / PCC 6301 / SAUG 1402/1) (Anacystis nidulans).